We begin with the raw amino-acid sequence, 424 residues long: Homeobox-containing protein 1 (424 aa).

Residues 1-30 enclose the HNF-p1 domain; it reads MLFTIEQLELIKKLQHTGMSSDQLLKAFGE. Residues 103-199 form the POU-specific atypical domain; that stretch reads SQRTPMKEIT…PNKLAAFLAD (97 aa). The segment at residues 215–291 is a DNA-binding region (homeobox); sequence QRRERYVFRP…NKRKELRRRS (77 aa). Residues 291–345 form a disordered region; that stretch reads SAEASAASTSSASSSASSTANHDSVSVSSMSPRDEETSSRNTTPETAISPSPAVS. The span at 293 to 310 shows a compositional bias: low complexity; the sequence is EASAASTSSASSSASSTA. 2 stretches are compositionally biased toward polar residues: residues 311-321 and 329-345; these read NHDSVSVSSMS and SRNTTPETAISPSPAVS.

This sequence belongs to the HMBOX1 homeobox family. As to expression, expressed in both AWC neurons. Also expressed in the FLP mechanosensory neurons.

The protein localises to the nucleus. In terms of biological role, transcriptional repressor which maintains cell fate asymmetry of AWC neurons in adults by repressing the expression of multiple AWC (OFF) genes, including srsx-3 in the AWC (ON) neuron. This is Homeobox-containing protein 1 from Caenorhabditis elegans.